Consider the following 264-residue polypeptide: Proteasome subunit beta type-4 (264 aa).

Residue Met1 is modified to N-acetylmethionine. Residues 1-45 constitute a propeptide that is removed on maturation; that stretch reads MEALLESRSGLWAGGPAPGQFYRIPPTPGSSVDPVSALYGSPITR. Tyr102 bears the Phosphotyrosine mark.

The protein belongs to the peptidase T1B family. The 26S proteasome consists of a 20S proteasome core and two 19S regulatory subunits. The 20S proteasome core is a barrel-shaped complex made of 28 subunits that are arranged in four stacked rings. The two outer rings are each formed by seven alpha subunits, and the two inner rings are formed by seven beta subunits. The proteolytic activity is exerted by three beta-subunits PSMB5, PSMB6 and PSMB7. Forms a ternary complex with SMAD1 and OAZ1 before PSMB4 is incorporated into the 20S proteasome. Interacts with PRPF19.

It is found in the cytoplasm. The protein resides in the nucleus. In terms of biological role, non-catalytic component of the 20S core proteasome complex involved in the proteolytic degradation of most intracellular proteins. This complex plays numerous essential roles within the cell by associating with different regulatory particles. Associated with two 19S regulatory particles, forms the 26S proteasome and thus participates in the ATP-dependent degradation of ubiquitinated proteins. The 26S proteasome plays a key role in the maintenance of protein homeostasis by removing misfolded or damaged proteins that could impair cellular functions, and by removing proteins whose functions are no longer required. Associated with the PA200 or PA28, the 20S proteasome mediates ubiquitin-independent protein degradation. This type of proteolysis is required in several pathways including spermatogenesis (20S-PA200 complex) or generation of a subset of MHC class I-presented antigenic peptides (20S-PA28 complex). SMAD1/OAZ1/PSMB4 complex mediates the degradation of the CREBBP/EP300 repressor SNIP1. The sequence is that of Proteasome subunit beta type-4 (PSMB4) from Bos taurus (Bovine).